We begin with the raw amino-acid sequence, 391 residues long: Lipid-A-disaccharide synthase (391 aa).

The protein belongs to the LpxB family.

It carries out the reaction a lipid X + a UDP-2-N,3-O-bis[(3R)-3-hydroxyacyl]-alpha-D-glucosamine = a lipid A disaccharide + UDP + H(+). It functions in the pathway bacterial outer membrane biogenesis; LPS lipid A biosynthesis. Condensation of UDP-2,3-diacylglucosamine and 2,3-diacylglucosamine-1-phosphate to form lipid A disaccharide, a precursor of lipid A, a phosphorylated glycolipid that anchors the lipopolysaccharide to the outer membrane of the cell. In Azoarcus sp. (strain BH72), this protein is Lipid-A-disaccharide synthase.